The sequence spans 339 residues: Phenylalanine--tRNA ligase alpha subunit (339 aa).

Residue Glu253 coordinates Mg(2+).

This sequence belongs to the class-II aminoacyl-tRNA synthetase family. Phe-tRNA synthetase alpha subunit type 1 subfamily. Tetramer of two alpha and two beta subunits. It depends on Mg(2+) as a cofactor.

It is found in the cytoplasm. It carries out the reaction tRNA(Phe) + L-phenylalanine + ATP = L-phenylalanyl-tRNA(Phe) + AMP + diphosphate + H(+). The polypeptide is Phenylalanine--tRNA ligase alpha subunit (Thioalkalivibrio sulfidiphilus (strain HL-EbGR7)).